The chain runs to 888 residues: Alanine--tRNA ligase (888 aa).

The Zn(2+) site is built by His-564, His-568, Cys-676, and His-680.

It belongs to the class-II aminoacyl-tRNA synthetase family. Requires Zn(2+) as cofactor.

Its subcellular location is the cytoplasm. It carries out the reaction tRNA(Ala) + L-alanine + ATP = L-alanyl-tRNA(Ala) + AMP + diphosphate. Functionally, catalyzes the attachment of alanine to tRNA(Ala) in a two-step reaction: alanine is first activated by ATP to form Ala-AMP and then transferred to the acceptor end of tRNA(Ala). Also edits incorrectly charged Ser-tRNA(Ala) and Gly-tRNA(Ala) via its editing domain. This Bartonella quintana (strain Toulouse) (Rochalimaea quintana) protein is Alanine--tRNA ligase.